The following is a 322-amino-acid chain: Solute carrier family 35 member B1 (322 aa).

The next 8 helical transmembrane spans lie at 12 to 32, 51 to 71, 85 to 105, 136 to 156, 168 to 188, 210 to 230, 243 to 263, and 285 to 305; these read LRLP…GILQ, FALT…KILI, WLYA…NSAL, YPLA…LFMY, TVGF…LTGV, LWST…WEFL, ILLF…TVVY, and VILF…LVFL. A Di-lysine motif motif is present at residues 318 to 322; sequence KKTSH.

Belongs to the nucleotide-sugar transporter family. SLC35B subfamily.

It is found in the endoplasmic reticulum membrane. The enzyme catalyses ADP(in) + ATP(out) = ADP(out) + ATP(in). It catalyses the reaction UDP(out) + ATP(in) = UDP(in) + ATP(out). It carries out the reaction UTP(out) + ATP(in) = UTP(in) + ATP(out). The catalysed reaction is dATP(out) + ATP(in) = dATP(in) + ATP(out). ATP:ADP antiporter that catalyzes the exchange of ATP and ADP across the endoplasmic reticulum (ER) membrane. Imports ATP from the cytosol to the ER lumen and exports ADP in the opposite direction. Regulates ER energy metabolism and protein biogenesis. Appears to be part of a calcium-dependent ER to cytosol low energy response axis, where calcium efflux from ER to the cytosol triggers ATP import into the ER lumen to maintain sufficient ATP supply. Provides ATP to ER chaperone HSPA5 that drives protein folding and trafficking in the ER. Can transport dATP, UTP or UDP in exchange for ATP, but the physiological relevance of this process remains to be established. The protein is Solute carrier family 35 member B1 (Slc35b1) of Mus musculus (Mouse).